The following is a 317-amino-acid chain: Uridine phosphorylase 2 (317 aa).

Phosphate contacts are provided by residues Gly66, Arg100, and 144–147; that span reads RIGT. Cysteines 95 and 102 form a disulfide. Uridine-binding positions include 148–149 and 223–225; these read SG and QGR.

The protein belongs to the PNP/UDP phosphorylase family. As to quaternary structure, homodimer. As to expression, predominantly expressed in kidney.

It catalyses the reaction uridine + phosphate = alpha-D-ribose 1-phosphate + uracil. It carries out the reaction 2'-deoxyuridine + phosphate = 2-deoxy-alpha-D-ribose 1-phosphate + uracil. The protein operates within pyrimidine metabolism; UMP biosynthesis via salvage pathway; uracil from uridine (phosphorylase route): step 1/1. With respect to regulation, a conditional disulfide bridge can form within the protein that dislocates a critical phosphate-coordinating arginine Arg-100 away from the active site, disabling the enzyme. Its function is as follows. Catalyzes the reversible phosphorylytic cleavage of uridine to uracil and ribose-1-phosphate which can then be utilized as carbon and energy sources or in the rescue of pyrimidine bases for nucleotide synthesis. Shows broad substrate specificity and can also accept deoxyuridine and other analogous compounds. The protein is Uridine phosphorylase 2 of Homo sapiens (Human).